The following is a 574-amino-acid chain: MSSGIILLIVAIVLLVIIAYLVGVIIRKRNDTLITSLEERKQALFGLPVNDEIEEVKSLHLIGQSQTSFREWNQKWVDLTLNTFTDIEKHIFEAEHLNDTFNFIRAKHEINSVESQLNLVEEDITAIREALGILKEQEEKNSARVTHALDLYEKLQASVAENEDNFGSTMAEIEKQMKNIEAEFSQFVALNSSGDPVEAAEVLDKAEEHTIALGQITEQIPAIVAKLEDDFPDQLDDLETGYRRLLEENYHFPEKNIEARFQEIRESIRANSSELVTLDLDRARDENTHIQERIDSLYELFEREIAAYKVVAKNSKILPRYLAHAKHNNEQLKHEIARLSRKYILSENEGLNIKAFDKDLKDIEDNVLEIAEAFDQQEKPFSELQLILDRSIKTLASVESGQMDVFAAVKDIEKIESQARQHLEIYVTQLHMIKRYMEKRNLPGIPQDFLSTFFTTSSQLEALMDELSRGRINIEAVSRLSEVATAAIANLEELTYQVVQHATLTEQLLQYSNRYRSFEAGVQNSFEHALKLFEVDNDYQASFDEISYALETVEPGVTERFVNSYEKTRERIRF.

Over 1–7 (MSSGIIL) the chain is Extracellular. A helical transmembrane segment spans residues 8 to 26 (LIVAIVLLVIIAYLVGVII). Topologically, residues 27-574 (RKRNDTLITS…YEKTRERIRF (548 aa)) are cytoplasmic. Coiled coils occupy residues 102 to 131 (NFIRAKHEINSVESQLNLVEEDITAIREAL), 161 to 190 (ENEDNFGSTMAEIEKQMKNIEAEFSQFVAL), 276 to 379 (VTLD…QQEK), and 459 to 493 (QLEALMDELSRGRINIEAVSRLSEVATAAIANLEE).

It belongs to the EzrA family.

Its subcellular location is the cell membrane. Functionally, negative regulator of FtsZ ring formation; modulates the frequency and position of FtsZ ring formation. Inhibits FtsZ ring formation at polar sites. Interacts either with FtsZ or with one of its binding partners to promote depolymerization. In Streptococcus equi subsp. zooepidemicus (strain H70), this protein is Septation ring formation regulator EzrA.